Here is a 136-residue protein sequence, read N- to C-terminus: Large ribosomal subunit protein bL17 (136 aa).

The protein belongs to the bacterial ribosomal protein bL17 family. In terms of assembly, part of the 50S ribosomal subunit. Contacts protein L32.

This is Large ribosomal subunit protein bL17 from Rickettsia peacockii (strain Rustic).